The following is a 210-amino-acid chain: LexA repressor (210 aa).

Positions 25 to 44 form a DNA-binding region, H-T-H motif; it reads AGQVAQEVGITKQAISQQVN. Active-site for autocatalytic cleavage activity residues include Ser120 and Lys159.

It belongs to the peptidase S24 family. As to quaternary structure, homodimer.

It catalyses the reaction Hydrolysis of Ala-|-Gly bond in repressor LexA.. Its function is as follows. Represses a number of genes involved in the response to DNA damage (SOS response), including recA and lexA. In the presence of single-stranded DNA, RecA interacts with LexA causing an autocatalytic cleavage which disrupts the DNA-binding part of LexA, leading to derepression of the SOS regulon and eventually DNA repair. The sequence is that of LexA repressor from Deinococcus radiodurans (strain ATCC 13939 / DSM 20539 / JCM 16871 / CCUG 27074 / LMG 4051 / NBRC 15346 / NCIMB 9279 / VKM B-1422 / R1).